Reading from the N-terminus, the 304-residue chain is tRNA-uridine aminocarboxypropyltransferase 1 (304 aa).

The disordered stretch occupies residues 1 to 30 (MALSPSVVPQESEENNANCVETKQSQTAST). The segment covering 15–30 (NNANCVETKQSQTAST) has biased composition (polar residues). The short motif at 206–209 (DSTW) is the DXTW element.

The protein belongs to the TDD superfamily. DTWD1 family.

It is found in the nucleus. It catalyses the reaction a uridine in tRNA + S-adenosyl-L-methionine = a 3-[(3S)-3-amino-3-carboxypropyl]uridine in tRNA + S-methyl-5'-thioadenosine + H(+). Catalyzes the formation of 3-(3-amino-3-carboxypropyl)uridine (acp3U) at position 20 in the D-loop of several cytoplasmic tRNAs (acp3U(20)). This is tRNA-uridine aminocarboxypropyltransferase 1 from Rattus norvegicus (Rat).